A 576-amino-acid chain; its full sequence is MNIQALLSDKVSQALIAAGAPADCEAQVRQSAKAQFGDYQANGVMAVAKKLGMQPRQLAERVVELLDLTGIASKIEIAGPGFINIFLDRQWVAEKVEYALTAPKLGVAPVEPQTIVVDYSAPNVAKQMHVGHLRSTIIGDAAVRTLAFLGHNVIRANHVGDWGTQFGMLIAYLEKMQNENASDMGLSDLELFYQQAKKTYDEDEEFALRARAYVVKLQSGDEYCRQMWRKLVDITMAQNQVAYDRLNVTLTKDDVMGESLYNAMLPEIVADLKAKGLAVESEGATVVYLDEYKNKDGEPMGVIIQKKDGGYLYTTTDIACAKYRYETLGADRILYYIDSRQHQHLMQAWTIVRKAGYVPESVPLEHHMFGMMLGKDGKPFKTRSGGTVKLSDLLDEAVERAGKLIAEKNPDMPADELKQVINAVGIGAVKYADLSKSRTTDYIFDWDNMLALDGNTAPYMQYAYTRVVSVFRRAGVDETSLTLPLVITEDREAALATRLLQFEEIITTVAREGTPHVMCSYLYDLAGLFSSFYEHCQILNAESEEIRQSRLKLAMLTAKTLKQGLDTLGIQTVERM.

The 'HIGH' region motif lies at 122–132 (PNVAKQMHVGH).

Belongs to the class-I aminoacyl-tRNA synthetase family. Monomer.

Its subcellular location is the cytoplasm. The enzyme catalyses tRNA(Arg) + L-arginine + ATP = L-arginyl-tRNA(Arg) + AMP + diphosphate. In Yersinia pseudotuberculosis serotype I (strain IP32953), this protein is Arginine--tRNA ligase.